A 161-amino-acid polypeptide reads, in one-letter code: Epoxidase gkaX (161 aa).

Residues 1–18 (MSLSTSLRLLRLLPAISS) form the signal peptide. N-linked (GlcNAc...) asparagine glycosylation occurs at Asn-45. The next 3 helical transmembrane spans lie at 59-79 (WQWI…LNLV), 92-112 (IWYV…KMAL), and 139-159 (WVRA…AAVS).

This sequence belongs to the epoxidase xenD family.

It is found in the membrane. Its pathway is mycotoxin biosynthesis. Epoxidase; part of the gene cluster that mediates the biosynthesis of GKK1032, fungal natural products containing a macrocyclic para-cyclophane connected to a decahydrofluorene ring system that show potent antitumor activities. Within the pathway, gkaX functions synergistically with gkaB and gkaZ to form the cyclophane. The pathway begins with the PKS-NRPS gkaA which, with the help of the trans-enoyl reductase gkaC, synthesizes the polyketide-tyrosyl acyl thioester product which can be reductively off-loaded by the terminal reductase (R) domain in gkaA. The alpha/beta hydrolase gkaG is then required to catalyze the subsequent Knoevenagel condensation that affords the 3-pyrrolin-2-one ring, whereas the three proteins gkaB, gkaX and gkaZ then function synergistically to form the cyclophane. The sequence is that of Epoxidase gkaX from Penicillium citrinum.